We begin with the raw amino-acid sequence, 488 residues long: Envelope glycoprotein gp62 (488 aa).

Positions 1-20 (MGKFLATLILFFQFCPLIFG) are cleaved as a signal peptide. Residues 21–442 (DYSPSCCTLT…LGLSQWAREA (422 aa)) are Extracellular-facing. N-linked (GlcNAc...) asparagine; by host glycans are attached at residues Asn-140 and Asn-222. Positions 225–228 (CIVC) match the CXXC motif. 2 N-linked (GlcNAc...) asparagine; by host glycosylation sites follow: Asn-244 and Asn-272. The segment at 313–333 (AVPVAVWLVSALAMGAGVAGG) is fusion peptide. Coiled coils occupy residues 341–387 (ASGK…LLFW) and 397–429 (QEQC…GWGL). Positions 376-392 (AQNRRGLDLLFWEQGGL) are immunosuppression. A disulfide bridge links Cys-393 with Cys-400. The N-linked (GlcNAc...) asparagine; by host glycan is linked to Asn-404. A helical transmembrane segment spans residues 443-463 (LQTGITLVALLLLVILAGPCI). Cys-462 carries the S-palmitoyl cysteine; by host lipid modification. Topologically, residues 464 to 488 (LRQLRHLPSRVRYPHYSLIKPESSL) are cytoplasmic.

In terms of assembly, the mature envelope protein (Env) consists of a trimer of SU-TM heterodimers attached by non-covalent interactions or by a labile interchain disulfide bond. Post-translationally, specific enzymatic cleavages in vivo yield mature proteins. Envelope glycoproteins are synthesized as an inactive precursor that is N-glycosylated and processed likely by host cell furin or by a furin-like protease in the Golgi to yield the mature SU and TM proteins. The cleavage site between SU and TM requires the minimal sequence [KR]-X-[KR]-R. In terms of processing, the transmembrane protein is palmitoylated.

The protein localises to the virion membrane. It is found in the host cell membrane. Functionally, the surface protein (SU) attaches the virus to the host cell by binding to its receptor. This interaction triggers the refolding of the transmembrane protein (TM) and is thought to activate its fusogenic potential by unmasking its fusion peptide. Fusion occurs at the host cell plasma membrane. In terms of biological role, the transmembrane protein (TM) acts as a class I viral fusion protein. Under the current model, the protein has at least 3 conformational states: pre-fusion native state, pre-hairpin intermediate state, and post-fusion hairpin state. During viral and target cell membrane fusion, the coiled coil regions (heptad repeats) assume a trimer-of-hairpins structure, positioning the fusion peptide in close proximity to the C-terminal region of the ectodomain. The formation of this structure appears to drive apposition and subsequent fusion of viral and target cell membranes. Membranes fusion leads to delivery of the nucleocapsid into the cytoplasm. This Homo sapiens (Human) protein is Envelope glycoprotein gp62 (env).